A 172-amino-acid chain; its full sequence is Peptide deformylase 1 (172 aa).

Fe cation is bound by residues cysteine 91 and histidine 133. Glutamate 134 is an active-site residue. Position 137 (histidine 137) interacts with Fe cation.

It belongs to the polypeptide deformylase family. Fe(2+) serves as cofactor.

The enzyme catalyses N-terminal N-formyl-L-methionyl-[peptide] + H2O = N-terminal L-methionyl-[peptide] + formate. Functionally, removes the formyl group from the N-terminal Met of newly synthesized proteins. Requires at least a dipeptide for an efficient rate of reaction. N-terminal L-methionine is a prerequisite for activity but the enzyme has broad specificity at other positions. This is Peptide deformylase 1 from Vibrio parahaemolyticus serotype O3:K6 (strain RIMD 2210633).